The following is a 405-amino-acid chain: Cysteine desulfurase IscS (405 aa).

Pyridoxal 5'-phosphate contacts are provided by residues 75–76 (AT), Asn156, Gln184, and 204–206 (SAH). Lys207 is subject to N6-(pyridoxal phosphate)lysine. Thr244 contacts pyridoxal 5'-phosphate. Cys329 functions as the Cysteine persulfide intermediate in the catalytic mechanism. A [2Fe-2S] cluster-binding site is contributed by Cys329.

This sequence belongs to the class-V pyridoxal-phosphate-dependent aminotransferase family. NifS/IscS subfamily. Homodimer. Forms a heterotetramer with IscU, interacts with other sulfur acceptors. Pyridoxal 5'-phosphate is required as a cofactor.

The protein resides in the cytoplasm. The enzyme catalyses (sulfur carrier)-H + L-cysteine = (sulfur carrier)-SH + L-alanine. The protein operates within cofactor biosynthesis; iron-sulfur cluster biosynthesis. In terms of biological role, master enzyme that delivers sulfur to a number of partners involved in Fe-S cluster assembly, tRNA modification or cofactor biosynthesis. Catalyzes the removal of elemental sulfur atoms from cysteine to produce alanine. Functions as a sulfur delivery protein for Fe-S cluster synthesis onto IscU, an Fe-S scaffold assembly protein, as well as other S acceptor proteins. This Methylobacillus flagellatus (strain ATCC 51484 / DSM 6875 / VKM B-1610 / KT) protein is Cysteine desulfurase IscS.